The sequence spans 392 residues: MSREPTPPLPGDMSTGPIAESWCYTQVKVVKFSYMWTINNFSFCREEMGEVLKSSTFSSGPSDKMKWCLRVNPKGLDDESKDYLSLYLLLVSCPKSEVRAKFKFSLLNAKREETKAMESQRAYRFVQGKDWGFKKFIRRDFLLDEANGLLPDDKLTLFCEVSVVQDSVNISGHTNTNTLKVPECRLAEDLGNLWENTRFTDCSFFVRGQEFKAHKSVLAARSPVFNAMFEHEMEESKKNRVEINDLDPEVFKEMMRFIYTGRAPNLDKMADNLLAAADKYALERLKVMCEEALCSNLSVENVADTLVLADLHSAEQLKAQAIDFINRCSVLRQLGCKDGKNWNSNQATDIMETSGWKSMIQSHPHLVAEAFRALASAQCPQFGIPRKRLKQS.

Positions 31–161 (KFSYMWTINN…DDKLTLFCEV (131 aa)) constitute an MATH domain. A BTB domain is found at 200-267 (TDCSFFVRGQ…IYTGRAPNLD (68 aa)).

Belongs to the Tdpoz family. In terms of assembly, homodimer. Heterodimer with SPOP. Component of cullin-RING-based BCR (BTB-CUL3-RBX1) E3 ubiquitin-protein ligase complexes containing homodimeric SPOPL or the heterodimer formed by SPOP and SPOPL. Interacts with CUL3 and MACROH2A1.

It is found in the nucleus. Its pathway is protein modification; protein ubiquitination. Component of a cullin-RING-based BCR (BTB-CUL3-RBX1) E3 ubiquitin-protein ligase complex that mediates the ubiquitination and subsequent proteasomal degradation of target proteins, but with relatively low efficiency. Cullin-RING-based BCR (BTB-CUL3-RBX1) E3 ubiquitin-protein ligase complexes containing homodimeric SPOPL or the heterodimer formed by SPOP and SPOPL are less efficient than ubiquitin ligase complexes containing only SPOP. May function to down-regulate the activity of cullin-RING-based BCR (BTB-CUL3-RBX1) E3 ubiquitin-protein ligase complexes that contain SPOP. The protein is Speckle-type POZ protein-like (SPOPL) of Homo sapiens (Human).